The following is a 178-amino-acid chain: Flagellar transcriptional regulator FlhC (178 aa).

Zn(2+) is bound by residues Cys138, Cys141, Cys158, and Cys161.

This sequence belongs to the FlhC family. In terms of assembly, heterohexamer composed of two FlhC and four FlhD subunits. Each FlhC binds a FlhD dimer, forming a heterotrimer, and a hexamer assembles by dimerization of two heterotrimers. The cofactor is Zn(2+).

The protein resides in the cytoplasm. Functionally, functions in complex with FlhD as a master transcriptional regulator that regulates transcription of several flagellar and non-flagellar operons by binding to their promoter region. Activates expression of class 2 flagellar genes, including fliA, which is a flagellum-specific sigma factor that turns on the class 3 genes. Also regulates genes whose products function in a variety of physiological pathways. This is Flagellar transcriptional regulator FlhC from Erwinia tasmaniensis (strain DSM 17950 / CFBP 7177 / CIP 109463 / NCPPB 4357 / Et1/99).